Here is a 260-residue protein sequence, read N- to C-terminus: Electron transfer flavoprotein subunit beta (260 aa).

It belongs to the ETF beta-subunit/FixA family. As to quaternary structure, heterodimer of an alpha and a beta subunit. It depends on FAD as a cofactor. AMP is required as a cofactor.

Functionally, the electron transfer flavoprotein serves as a specific electron acceptor for other dehydrogenases. It transfers the electrons to the main respiratory chain via ETF-ubiquinone oxidoreductase (ETF dehydrogenase). This chain is Electron transfer flavoprotein subunit beta (etfB), found in Thermoanaerobacterium thermosaccharolyticum (strain ATCC 7956 / DSM 571 / NCIMB 9385 / NCA 3814 / NCTC 13789 / WDCM 00135 / 2032) (Clostridium thermosaccharolyticum).